The following is a 621-amino-acid chain: Glutathione-regulated potassium-efflux system protein KefC (621 aa).

The next 12 helical transmembrane spans lie at 9-29 (ALIY…LGLG), 30-50 (SVLG…RLVN), 54-74 (AILH…GLEL), 90-110 (GALQ…LLGL), 114-134 (VAEL…MQAM), 149-169 (FAVL…IPLL), 178-198 (LMAF…VVVL), 232-252 (LLLE…GVLL), 270-290 (GLLL…APWS), 296-316 (IVIL…LIAQ), 326-346 (RWFA…FGPA), and 359-379 (ALTL…VLLT). Positions 399 to 518 (QPRVIVAGFG…AGVEAPERET (120 aa)) constitute an RCK N-terminal domain. The disordered stretch occupies residues 598–621 (GWQGTEEGRHTGDIADEPENKPSA).

It belongs to the monovalent cation:proton antiporter 2 (CPA2) transporter (TC 2.A.37) family. KefC subfamily. In terms of assembly, homodimer. Interacts with the regulatory subunit KefF.

It is found in the cell inner membrane. Functionally, pore-forming subunit of a potassium efflux system that confers protection against electrophiles. Catalyzes K(+)/H(+) antiport. The chain is Glutathione-regulated potassium-efflux system protein KefC from Klebsiella aerogenes (Enterobacter aerogenes).